The chain runs to 223 residues: Small heat shock protein hspI, mitochondrial (223 aa).

The N-terminal 23 residues, 1–23 (MYKLSKTTPFFFRRAFLCGRRGG), are a transit peptide targeting the mitochondrion. In terms of domain architecture, sHSP spans 109–223 (KTRGFRSPKT…YVKSTTINVQ (115 aa)).

This sequence belongs to the small heat shock protein (HSP20) family.

The protein resides in the mitochondrion. This chain is Small heat shock protein hspI, mitochondrial (hspI), found in Dictyostelium discoideum (Social amoeba).